A 234-amino-acid chain; its full sequence is Ponticulin-like protein J (234 aa).

The signal sequence occupies residues 1–20 (MRLLNNLILMVVLFVAVSNA). Asparagine 19, asparagine 143, asparagine 166, and asparagine 206 each carry an N-linked (GlcNAc...) asparagine glycan. Residues 115–213 (TIKCGTLPPD…SDNETAEGNN (99 aa)) are disordered. Residues 154-195 (KSTPKSPSTPKTNNSNEDSDLTTSSSDSSSSTKSSPKSKSST) show a composition bias toward low complexity. The GPI-like-anchor amidated asparagine moiety is linked to residue asparagine 212. An N-linked (GlcNAc...) asparagine glycan is attached at asparagine 213. Residues 213 to 234 (NASSNIATFSLVIISLLVASLF) constitute a propeptide, removed in mature form.

It belongs to the ponticulin family. The GPI-like-anchor contains a phosphoceramide group, rather than a phosphatidyl group.

It is found in the cell membrane. In terms of biological role, binds F-actin and nucleates actin assembly. This is Ponticulin-like protein J (ponJ) from Dictyostelium discoideum (Social amoeba).